Reading from the N-terminus, the 433-residue chain is MVSTSSYQTTKSKEIFTAAQKLMPGGVSSPVRAFKSVGGQPIVFESVKGAYIRDVDGNEYIDYVGTWGPAICGHAHPEVIAALHDALDKGTSFGAPCVQENILAEMVIDAVPSIEMVRFVNSGTEACMSVLRLMRAFTGRDKIIKFEGCYHGHADMFLVKAGSGVATLGLPDSPGVPKTTTNNTLTAPYNDLEAVKALFVENPDSIAGVILEPVVGNAGFIVPDAGFLEGLRELTKEYGALLMFDEVMTGFRIAYGGAQEKFGITPDLTTLGKVIGGGLPVGAYGGRADIMAMVAPAGPMYQAGTLSGNPLAMTAGIKTLELLQRPGTYQYLDKVTKSLTEGLLKVARDAGHSVSGGYISAMFGMFFTGSPVHNYEDAKKADVAKFGRFHRGMLERGVYLAPSQFEAGFTSLAHTEADIERTLAAAKEVLASL.

Lys-273 is subject to N6-(pyridoxal phosphate)lysine.

The protein belongs to the class-III pyridoxal-phosphate-dependent aminotransferase family. HemL subfamily. As to quaternary structure, homodimer. Pyridoxal 5'-phosphate is required as a cofactor.

The protein localises to the cytoplasm. The enzyme catalyses (S)-4-amino-5-oxopentanoate = 5-aminolevulinate. It participates in porphyrin-containing compound metabolism; protoporphyrin-IX biosynthesis; 5-aminolevulinate from L-glutamyl-tRNA(Glu): step 2/2. The protein operates within porphyrin-containing compound metabolism; chlorophyll biosynthesis. In Microcystis aeruginosa (strain NIES-843 / IAM M-2473), this protein is Glutamate-1-semialdehyde 2,1-aminomutase.